We begin with the raw amino-acid sequence, 609 residues long: CTTNBP2 N-terminal-like protein (609 aa).

Residues 1-10 show a composition bias toward polar residues; that stretch reads MEQNSNSSVA. Positions 1–29 are disordered; that stretch reads MEQNSNSSVADTFAEAPATDADYGTENCS. 2 coiled-coil regions span residues 182–264 and 303–370; these read RMVN…QKQI and IAEG…QQLG. The tract at residues 556 to 584 is disordered; sequence PPAGARGAPPPIPTKPIVPPKREPSLSRL. Residues 563-574 show a composition bias toward pro residues; sequence APPPIPTKPIVP. Ser586 carries the post-translational modification Phosphoserine.

The protein localises to the cell projection. It localises to the lamellipodium. The protein resides in the cytoplasm. Its subcellular location is the cytoskeleton. It is found in the stress fiber. Its function is as follows. Regulates lamellipodial actin dynamics in a Cortactin-dependent manner and is therefore likely involved in controlling actin branch density, actin-retrograde flow rates and lamellipodial protrusion. Functions by slowing the dissociation of Cortactin from Arp2/3 nucleated branches thereby increasing branch nucleation and junction stability. Associates with core striatin-interacting phosphatase and kinase (STRIPAK) complex to form CTTNBP2NL-STRIPAK complexes. STRIPAK complexes have critical roles in protein (de)phosphorylation and are regulators of multiple signaling pathways including Hippo, MAPK, nuclear receptor and cytoskeleton remodeling. Different types of STRIPAK complexes are involved in a variety of biological processes such as cell growth, differentiation, apoptosis, metabolism and immune regulation. The chain is CTTNBP2 N-terminal-like protein from Drosophila melanogaster (Fruit fly).